The chain runs to 308 residues: Protein translocase subunit SecF (308 aa).

6 consecutive transmembrane segments (helical) span residues 10–30 (LFFAISLAMIIPGLIVMAIFG), 129–149 (LAVSIAALAVIIYITWAFRGV), 160–180 (IIAMIHDVLVVISLVSIGGVL), 181–201 (FGWQVDALFLTALLSVIGFSV), 241–261 (TQLMTVEYMLLAIALFGGITL), and 264–284 (FAIILLVGLFMGTYSSIFIAA).

The protein belongs to the SecD/SecF family. SecF subfamily. As to quaternary structure, forms a complex with SecD. Part of the essential Sec protein translocation apparatus which comprises SecA, SecYEG and auxiliary proteins SecDF. Other proteins may also be involved.

Its subcellular location is the cell membrane. Its function is as follows. Part of the Sec protein translocase complex. Interacts with the SecYEG preprotein conducting channel. SecDF uses the proton motive force (PMF) to complete protein translocation after the ATP-dependent function of SecA. The polypeptide is Protein translocase subunit SecF (Anaerolinea thermophila (strain DSM 14523 / JCM 11388 / NBRC 100420 / UNI-1)).